We begin with the raw amino-acid sequence, 372 residues long: Protein L-Myc-1a (372 aa).

2 disordered regions span residues 172–226 and 243–306; these read KVAA…ADPF and NYAA…DDLR. The segment covering 187–197 has biased composition (acidic residues); sequence SDDDEDDDEID. Over residues 269-284 the composition is skewed to low complexity; the sequence is ESSSAPSSPLSSPATS. The bHLH domain maps to 289-341; that stretch reads STEQRRNFLERKRRDDLRSRFQALREEIPGLSGSSKTSKVAILTQATDYLLQL. The span at 290–306 shows a compositional bias: basic and acidic residues; that stretch reads TEQRRNFLERKRRDDLR. The tract at residues 341–369 is leucine-zipper; it reads LHSSQRRQAQEKRKLKAKQQQLLRRISAL.

In terms of assembly, efficient DNA binding requires dimerization with another bHLH protein. Binds DNA as a heterodimer with max. Uterus.

It localises to the nucleus. The sequence is that of Protein L-Myc-1a from Danio rerio (Zebrafish).